Consider the following 479-residue polypeptide: Anaerobic nitric oxide reductase flavorubredoxin (479 aa).

Positions 30–210 are zinc metallo-hydrolase; that stretch reads LRGSSYNSYL…PFSRLVTPKI (181 aa). Fe cation contacts are provided by His79, Glu81, Asp83, His147, Asp166, and His227. Residues 254–393 form the Flavodoxin-like domain; it reads ITIFYDTMSN…LCREHGREIA (140 aa). FMN contacts are provided by residues 260-264 and 342-369; these read TMSNN and AFGS…EMSL. Residues 423–474 form the Rubredoxin-like domain; the sequence is GPRMQCSVCQWIYDPAKGEPMQDVAPGTPWSEVPDNFLCPECSLGKDVFEEL. Residues Cys428, Cys431, Cys461, and Cys464 each contribute to the Fe cation site.

The protein in the N-terminal section; belongs to the zinc metallo-hydrolase group 3 family. Homotetramer. Requires Fe cation as cofactor. It depends on FMN as a cofactor.

Its subcellular location is the cytoplasm. The protein operates within nitrogen metabolism; nitric oxide reduction. Its function is as follows. Anaerobic nitric oxide reductase; uses NADH to detoxify nitric oxide (NO), protecting several 4Fe-4S NO-sensitive enzymes. Has at least 2 reductase partners, only one of which (NorW, flavorubredoxin reductase) has been identified. NO probably binds to the di-iron center; electrons enter from the NorW at rubredoxin and are transferred sequentially to the FMN center and the di-iron center. Also able to function as an aerobic oxygen reductase. The polypeptide is Anaerobic nitric oxide reductase flavorubredoxin (Shigella boydii serotype 4 (strain Sb227)).